Consider the following 68-residue polypeptide: DNA-directed RNA polymerase subunit Rpo10 (68 aa).

Positions 7, 10, 44, and 45 each coordinate Zn(2+).

Belongs to the archaeal Rpo10/eukaryotic RPB10 RNA polymerase subunit family. Part of the RNA polymerase complex. Zn(2+) is required as a cofactor.

The protein localises to the cytoplasm. It carries out the reaction RNA(n) + a ribonucleoside 5'-triphosphate = RNA(n+1) + diphosphate. In terms of biological role, DNA-dependent RNA polymerase (RNAP) catalyzes the transcription of DNA into RNA using the four ribonucleoside triphosphates as substrates. The polypeptide is DNA-directed RNA polymerase subunit Rpo10 (Methanococcus maripaludis (strain C7 / ATCC BAA-1331)).